Here is a 363-residue protein sequence, read N- to C-terminus: Inositol-3-phosphate synthase (363 aa).

NAD(+) is bound by residues aspartate 68, alanine 127, tyrosine 147, serine 190, aspartate 225, and lysine 238.

The protein belongs to the myo-inositol 1-phosphate synthase family. In terms of assembly, monomer. It depends on NAD(+) as a cofactor.

It carries out the reaction D-glucose 6-phosphate = 1D-myo-inositol 3-phosphate. It functions in the pathway polyol metabolism; myo-inositol biosynthesis; myo-inositol from D-glucose 6-phosphate: step 1/2. Functionally, key enzyme in myo-inositol biosynthesis pathway that catalyzes the conversion of glucose 6-phosphate to 1D-myo-inositol 3-phosphate in a NAD-dependent manner. Plays a key role in oxidative stress resistance as its product is the precursor of the protective antioxidant mycothiol (MSH or AcCys-GlcN-Ins). This Corynebacterium glutamicum (strain ATCC 13032 / DSM 20300 / JCM 1318 / BCRC 11384 / CCUG 27702 / LMG 3730 / NBRC 12168 / NCIMB 10025 / NRRL B-2784 / 534) protein is Inositol-3-phosphate synthase.